The chain runs to 469 residues: MFQNADEVQKYVADNDVKFIDVRFCDLPGVMQHFTIPAATFDPAEELAFDGSSIRGFQAIHESDMALRADLSTARVDPFRRDKTININFFIHDPITGEQYSRDPRNIAKKAEAYLASTGIADTAYFGPEAEFYVFDNVRFQTSANESFYHIDSEAGAWNTGAVENNRGYKVRYKGGYFPAPPVDHFADLRAEISLELDKNGLQVERQHHEVGTAGQAEINYKFNTLLAAADDLMLFKYIVKNVAWRNGKTATFMPKPIFGDNGSGMHVHQSLWQGGSPLFYDEQGYAGLSDTARYYIGGILKHAPSLLAFTNPTVNSYHRLVPGFEAPVNMVYSQRNRSAAMRIPITGSNPKAKRVEFRAPDPSSNPYLAFSALLMAGLDGVKNKIEPAEPIDKDLYELAPEEHANVQQVPTSLPAVLDALEADNEYLQAGGVFTSDLIETWIDYKRTNEIAPIQLRPHPHEFELYFDI.

Positions 15–96 (NDVKFIDVRF…INFFIHDPIT (82 aa)) constitute a GS beta-grasp domain. The region spanning 104 to 469 (PRNIAKKAEA…PHEFELYFDI (366 aa)) is the GS catalytic domain. The Mg(2+) site is built by glutamate 129 and glutamate 131. Glutamate 205 contacts ATP. Residues glutamate 210 and glutamate 218 each contribute to the Mg(2+) site. An ATP-binding site is contributed by 221 to 223 (YKF). Residues 262-263 (NG) and glycine 263 each bind L-glutamate. A Mg(2+)-binding site is contributed by histidine 267. ATP contacts are provided by residues 269–271 (HQS) and serine 271. Arginine 320, glutamate 326, and arginine 338 together coordinate L-glutamate. Residues arginine 338, arginine 343, and lysine 352 each contribute to the ATP site. Glutamate 357 is a Mg(2+) binding site. Arginine 359 contributes to the L-glutamate binding site. Tyrosine 397 bears the O-AMP-tyrosine mark.

The protein belongs to the glutamine synthetase family. Oligomer of 12 subunits arranged in the form of two hexagons. Requires Mg(2+) as cofactor.

The protein resides in the cytoplasm. It carries out the reaction L-glutamate + NH4(+) + ATP = L-glutamine + ADP + phosphate + H(+). Its activity is regulated as follows. The activity of this enzyme could be controlled by adenylation under conditions of abundant glutamine. In terms of biological role, catalyzes the ATP-dependent biosynthesis of glutamine from glutamate and ammonia. The chain is Glutamine synthetase from Streptomyces filamentosus (Streptomyces roseosporus).